Reading from the N-terminus, the 691-residue chain is Elongation factor G (691 aa).

A tr-type G domain is found at 8 to 283 (KKVRNIGIAA…AVVAYLPAPD (276 aa)). GTP is bound by residues 17 to 24 (AHIDAGKT), 81 to 85 (DTPGH), and 135 to 138 (NKMD).

This sequence belongs to the TRAFAC class translation factor GTPase superfamily. Classic translation factor GTPase family. EF-G/EF-2 subfamily.

The protein localises to the cytoplasm. In terms of biological role, catalyzes the GTP-dependent ribosomal translocation step during translation elongation. During this step, the ribosome changes from the pre-translocational (PRE) to the post-translocational (POST) state as the newly formed A-site-bound peptidyl-tRNA and P-site-bound deacylated tRNA move to the P and E sites, respectively. Catalyzes the coordinated movement of the two tRNA molecules, the mRNA and conformational changes in the ribosome. This is Elongation factor G from Campylobacter jejuni subsp. jejuni serotype O:23/36 (strain 81-176).